A 132-amino-acid chain; its full sequence is Phosphoribosyl-AMP cyclohydrolase (132 aa).

Asp-76 contacts Mg(2+). A Zn(2+)-binding site is contributed by Cys-77. Mg(2+) contacts are provided by Asp-78 and Asp-80. Positions 93 and 100 each coordinate Zn(2+).

The protein belongs to the PRA-CH family. Homodimer. Mg(2+) serves as cofactor. Zn(2+) is required as a cofactor.

It is found in the cytoplasm. It catalyses the reaction 1-(5-phospho-beta-D-ribosyl)-5'-AMP + H2O = 1-(5-phospho-beta-D-ribosyl)-5-[(5-phospho-beta-D-ribosylamino)methylideneamino]imidazole-4-carboxamide. It participates in amino-acid biosynthesis; L-histidine biosynthesis; L-histidine from 5-phospho-alpha-D-ribose 1-diphosphate: step 3/9. Its function is as follows. Catalyzes the hydrolysis of the adenine ring of phosphoribosyl-AMP. The protein is Phosphoribosyl-AMP cyclohydrolase of Methanobrevibacter smithii (strain ATCC 35061 / DSM 861 / OCM 144 / PS).